Reading from the N-terminus, the 30-residue chain is Trypsin inhibitor 1 (30 aa).

Disulfide bonds link Cys-4-Cys-21, Cys-11-Cys-23, and Cys-17-Cys-29.

The protein belongs to the protease inhibitor I7 (squash-type serine protease inhibitor) family.

It localises to the secreted. Its function is as follows. Inhibits trypsin. In Citrullus lanatus (Watermelon), this protein is Trypsin inhibitor 1.